Here is a 189-residue protein sequence, read N- to C-terminus: Recombination protein RecR (189 aa).

The C4-type zinc-finger motif lies at 48 to 63 (CQTCFHLSAEPLCDIC). Residues 71 to 165 (QLLCVVADSR…QVSRIAYGLP (95 aa)) enclose the Toprim domain.

Belongs to the RecR family.

Functionally, may play a role in DNA repair. It seems to be involved in an RecBC-independent recombinational process of DNA repair. It may act with RecF and RecO. The protein is Recombination protein RecR of Prochlorococcus marinus (strain MIT 9313).